A 1612-amino-acid polypeptide reads, in one-letter code: MAYTQQATNAALASTLRGNNPLVNDLANRRLYESAVEQCNAHDRRPKVNFLRSISEEQTLIATKAYPEFQITFYNTQNAVHSLAGGLRSLELEYLMMQIPYGSTTYDIGGNFAAHMFKGRDYVHCCMPNMDLRDVMRHNAQKDSIELYLSKLAQKKKVIPPYQKPCFDKYTDDPQSVVCSKPFQHCEGVSHCTDKVYAVALHSLYDIPADEFGAALLRRNVHVCYAAFHFSENLLLEDSYVSLDDIGAFFSREGDMLNFSFVAESTLNYTHSYSNVLKYVCKTYFPASSREVYMKEFLVTRVNTWFCKFSRLDTFVLYRGVYHRGVDKEQFYSAMEDAWHYKKTLAMMNSERILLEDSSSVNYWFPKMKDMVIVPLFDVSLQNEGKRLARKEVMVSKDFVYTVLNHIRTYQSKALTYANVLSFVESIRSRVIINGVTARSEWDVDKALLQSLSMTFFLQTKLAMLKDDLVVQKFQVHSKSLTEYVWDEITAAFHNCFPTIKERLINKKLITVSEKALEIKVPDLYVTFHDRLVKEYKSSVEMPVLDVKKSLEEAEVMYNALSEISILKDSDKFDVDVFSRMCNTLGVDPLVAAKVMVAVVSNESGLTLTFERPTEANVALALQPTITSKEEGSLKIVSSDVGESSIKEVVRKSEISMLGLTGNTVSDEFQRSTEIESLQQFHMVSTETIIRKQMHAMVYTGPLKVQQCKNYLDSLVASLSAAVSNLKKIIKDTAAIDLETKEKFGVYDVCLKKWLVKPLSKGHAWGVVMDSDYKCFVALLTYDGENIVCGETWRRVAVSSESLVYSDMGKIRAIRSVLKDGEPHISSAKVTLVDGVPGCGKTKEILSRVNFDEDLVLVPGKQAAEMIRRRANSSGLIVATKENVRTVDSFLMNYGRGPCQYKRLFLDEGLMLHPGCVNFLVGMSLCSEAFVYGDTQQIPYINRVATFPYPKHLSQLEVDAVETRRTTLRCPADITFFLNQKYEGQVMCTSSVTRSVSHEVIQGAAVMNPVSKPLKGKVITFTQSDKSLLLSRGYEDVHTVHEVQGETFEDVSLVRLTPTPVGIISKQSPHLLVSLSRHTRSIKYYTVVLDAVVSVLRDLECVSSYLLDMYKVDVSTQYQLQIESVYKGVNLFVAAPKTGDVSDMQYYYDKCLPGNSTILNEYDAVTMQIRENSLNVKDCVLDMSKSVPLPRESETTLKPVIRTAAEKPRKPGLLENLVAMIKRNFNSPELVGVVDIEDTASLVVDKFFDAYLIKEKKKPKNIPLLSRASLERWIEKQEKSTIGQLADFDFIDLPAVDQYRHMIKQQPKQRLDLSIQTEYPALQTIVYHSKKINALFGPVFSELTRQLLETIDSSRFMFYTRKTPTQIEEFFSDLDSNVPMDILELDISKYDKSQNEFHCAVEYEIWKRLGLDDFLAEVWKHGHRKTTLKDYTAGIKTCLWYQRKSGDVTTFIGNTIIIAACLSSMLPMERLIKGAFCGDDSILYFPKGTDFPDIQQGANLLWNFEAKLFRKRYGYFCGRYIIHHDRGCIVYYDPLKLISKLGAKHIKNREHLEEFRTSLCDVAGSLNNCAYYTHLDDAVGEVIKTAPPGSFVYRALVKYLCDKRLFQTLFLE.

The tract at residues 52–466 (RSISEEQTLI…FLQTKLAMLK (415 aa)) is methyltransferase. One can recognise an Alphavirus-like MT domain in the interval 72–280 (TFYNTQNAVH…HSYSNVLKYV (209 aa)). The (+)RNA virus helicase ATP-binding domain maps to 803–964 (LVYSDMGKIR…QLEVDAVETR (162 aa)). Residues 831–1086 (TLVDGVPGCG…RHTRSIKYYT (256 aa)) are helicase. ATP is bound by residues 838–843 (GCGKTK), Arg-870, 968–969 (LR), Arg-1077, and 1098–1101 (DLEC). A (+)RNA virus helicase C-terminal domain is found at 965–1117 (RTTLRCPADI…DMYKVDVSTQ (153 aa)). In terms of domain architecture, RdRp catalytic spans 1380-1493 (MDILELDISK…YFPKGTDFPD (114 aa)).

This sequence belongs to the ssRNA positive-strand viruses RNA-directed RNA polymerase family. In terms of assembly, heterodimer of a large and a small subunit. Both large and small subunits interact, via an ATP bridge, with host protein Tm-1 (e.g. tomato Tm-1 AC A7M6E7 and AC A7M6E8).

It carries out the reaction RNA(n) + a ribonucleoside 5'-triphosphate = RNA(n+1) + diphosphate. It catalyses the reaction ATP + H2O = ADP + phosphate + H(+). In resistant plants, is bound by host protein Tm-1 (e.g. tomato Tm-1 AC A7M6E7), thereby inhibiting replication complex activity. Is an RNA-dependent RNA polymerase active in viral RNA replication. Functionally, is a methyltransferase active in RNA capping and an RNA helicase. Methyltransferase displays a cytoplasmic capping enzyme activity. This function is necessary since all viral RNAs are synthesized in the cytoplasm, and host capping enzymes are restricted to the nucleus. Helicase region probably exhibits NTPase and RNA unwinding activities (Potential). It also acts as a suppressor of RNA-mediated gene silencing, also known as post-transcriptional gene silencing (PTGS), a mechanism of plant viral defense that limits the accumulation of viral RNAs. May mediate silencing suppression through either inhibition of HEN1-mediated siRNA or siRNA demethylation. This is Replicase large subunit from Pepper mild mottle virus (strain Japan) (PMMV-J).